Consider the following 89-residue polypeptide: Cell division topological specificity factor (89 aa).

Belongs to the MinE family.

In terms of biological role, prevents the cell division inhibition by proteins MinC and MinD at internal division sites while permitting inhibition at polar sites. This ensures cell division at the proper site by restricting the formation of a division septum at the midpoint of the long axis of the cell. This is Cell division topological specificity factor from Klebsiella pneumoniae (strain 342).